Here is a 438-residue protein sequence, read N- to C-terminus: sn-glycerol-3-phosphate-binding periplasmic protein UgpB (438 aa).

The N-terminal stretch at 1–23 (MKPLHYTASALALGLALMGNAQA) is a signal peptide. Positions 65, 89, 144, 270, 307, 346, and 397 each coordinate sn-glycerol 3-phosphate.

It belongs to the bacterial solute-binding protein 1 family. As to quaternary structure, the complex is composed of two ATP-binding proteins (UgpC), two transmembrane proteins (UgpA and UgpE) and a solute-binding protein (UgpB).

It is found in the periplasm. In terms of biological role, part of the ABC transporter complex UgpBAEC involved in sn-glycerol-3-phosphate (G3P) import. Binds G3P. The protein is sn-glycerol-3-phosphate-binding periplasmic protein UgpB (ugpB) of Shigella dysenteriae serotype 1 (strain Sd197).